The following is a 547-amino-acid chain: Chaperonin GroEL (547 aa).

Residues 30–33 (TLGP), K51, 87–91 (DGTTT), G415, 479–481 (NAA), and D495 contribute to the ATP site. The tract at residues 524-547 (APKKDEPTPPAAGGGMGGMGGMDF) is disordered. The segment covering 535-547 (AGGGMGGMGGMDF) has biased composition (gly residues).

This sequence belongs to the chaperonin (HSP60) family. In terms of assembly, forms a cylinder of 14 subunits composed of two heptameric rings stacked back-to-back. Interacts with the co-chaperonin GroES.

It localises to the cytoplasm. It catalyses the reaction ATP + H2O + a folded polypeptide = ADP + phosphate + an unfolded polypeptide.. Together with its co-chaperonin GroES, plays an essential role in assisting protein folding. The GroEL-GroES system forms a nano-cage that allows encapsulation of the non-native substrate proteins and provides a physical environment optimized to promote and accelerate protein folding. This Xylella fastidiosa (strain 9a5c) protein is Chaperonin GroEL.